Consider the following 57-residue polypeptide: Ribulose bisphosphate carboxylase large chain (57 aa).

The propeptide occupies Met-1–Ser-2. Pro-3 is subject to N-acetylproline. Lys-14 is modified (N6,N6,N6-trimethyllysine).

Belongs to the RuBisCO large chain family. Type I subfamily. In terms of assembly, heterohexadecamer of 8 large chains and 8 small chains.

Its subcellular location is the plastid. It is found in the chloroplast. The enzyme catalyses 2 (2R)-3-phosphoglycerate + 2 H(+) = D-ribulose 1,5-bisphosphate + CO2 + H2O. It carries out the reaction D-ribulose 1,5-bisphosphate + O2 = 2-phosphoglycolate + (2R)-3-phosphoglycerate + 2 H(+). In terms of biological role, ruBisCO catalyzes two reactions: the carboxylation of D-ribulose 1,5-bisphosphate, the primary event in carbon dioxide fixation, as well as the oxidative fragmentation of the pentose substrate in the photorespiration process. Both reactions occur simultaneously and in competition at the same active site. In Buxus sempervirens (Common box), this protein is Ribulose bisphosphate carboxylase large chain (rbcL).